Here is a 910-residue protein sequence, read N- to C-terminus: Translation factor GUF1 homolog, mitochondrial (910 aa).

The interval 126–188 (RRGNGLPFER…DGGGAPEHPQ (63 aa)) is disordered. A tr-type G domain is found at 189 to 366 (QNVRNFCILA…RIVSDIPCPA (178 aa)). Residues 198-205 (AHIDSGKS), 259-263 (DTPGH), and 313-316 (NKID) contribute to the GTP site. Residues 639–683 (GSGDGRADGSADGSADGSADGSGDSSAHGSSDRRGAGCARGSDDI) form a disordered region. The span at 646–667 (DGSADGSADGSADGSGDSSAHG) shows a compositional bias: low complexity.

The protein belongs to the TRAFAC class translation factor GTPase superfamily. Classic translation factor GTPase family. LepA subfamily.

The protein localises to the mitochondrion inner membrane. It catalyses the reaction GTP + H2O = GDP + phosphate + H(+). Functionally, promotes mitochondrial protein synthesis. May act as a fidelity factor of the translation reaction, by catalyzing a one-codon backward translocation of tRNAs on improperly translocated ribosomes. Binds to mitochondrial ribosomes in a GTP-dependent manner. This is Translation factor GUF1 homolog, mitochondrial from Plasmodium vivax (strain Salvador I).